Consider the following 114-residue polypeptide: Histone H2A.Z-specific chaperone chz-1 (114 aa).

Positions 1–22 (MSTENGTTDTTLAGTAEANTPF) are enriched in polar residues. Residues 1-114 (MSTENGTTDT…FVPEDEEMEE (114 aa)) are disordered. Basic and acidic residues predominate over residues 24 to 40 (SKGKGKAAAESEDHPMG). Composition is skewed to acidic residues over residues 41–68 (EAED…EEID) and 93–114 (PAEE…EMEE).

The protein belongs to the CHZ1 family. In terms of assembly, forms a heterotrimer with H2A.Z-H2B, stabilizing the association of the histone dimer. Also, with a lower affinity, forms a heterotrimer with H2A-H2B.

Its subcellular location is the nucleus. Forms a chaperone-bound H2A.Z-H2B complex that acts as a source for SWR1 complex-dependent H2A to H2A.Z histone replacement in chromatin. This Neurospora crassa (strain ATCC 24698 / 74-OR23-1A / CBS 708.71 / DSM 1257 / FGSC 987) protein is Histone H2A.Z-specific chaperone chz-1 (chz-1).